A 721-amino-acid polypeptide reads, in one-letter code: bZIP transcription factor 17 (721 aa).

Disordered stretches follow at residues 1 to 51 (MAEP…LMSD) and 87 to 232 (QEQF…EKKR). The Cytoplasmic segment spans residues 1–366 (MAEPITKEQP…KSEAKTKKVA (366 aa)). Residues 9-25 (QPPPPAPDPNSTYPPPS) show a composition bias toward pro residues. The segment covering 125 to 141 (ESPRDSDDRCSGADHNL) has biased composition (basic and acidic residues). Over residues 146–170 (PLSSQGSGNCGSDVSEATNESSPKS) the composition is skewed to polar residues. Residues 204–216 (DESRNSKYRRSGE) are compositionally biased toward basic and acidic residues. A bZIP domain is found at 228 to 288 (DEKKRARLMR…AENATLRQQL (61 aa)). Residues 230-261 (KKRARLMRNRESAQLSRQRKKHYVEELEEKVR) form a basic motif region. Residues 267–274 (ITDLNGKI) form a leucine-zipper region. The interval 337 to 359 (PRLKPQNTLGTSKAKKSESKKSE) is disordered. Residues 367 to 387 (SISFLGLLFCLFLFGALAPIV) traverse the membrane as a helical segment. Residues 388–721 (NVNYGGISGA…RSGAPHLVTT (334 aa)) are Lumenal-facing. The segment covering 422–436 (TSRSGAGTGVSNSNG) has biased composition (polar residues). Residues 422 to 462 (TSRSGAGTGVSNSNGMHRGRDSDRGARKNISATESSVTPGN) form a disordered region. N-linked (GlcNAc...) asparagine glycans are attached at residues Asn450, Asn462, Asn609, and Asn617. The span at 451-462 (ISATESSVTPGN) shows a compositional bias: polar residues. The short motif at 627-630 (RRIL) is the RRIL cleavage motif element. Residues Asn643 and Asn651 are each glycosylated (N-linked (GlcNAc...) asparagine).

Belongs to the bZIP family. As to quaternary structure, interacts with BZIP28.

The protein localises to the endoplasmic reticulum membrane. Its subcellular location is the golgi apparatus membrane. The protein resides in the nucleus. In terms of biological role, transcriptional activator involved in salt and osmotic stress responses. Functions as a stress sensor and transducer in a signaling pathway that resembles an ER stress response. Following salt stress, BZIP17 is cleaved by SBT6.1 (S1P) and S2P at the C-terminus and the N-terminal bZIP component is translocated to the nucleus, where it activates the expression of salt stress response genes. Functions as a stress sensor and transducer in ER stress signaling pathway. ER stress induces proteolysis of BZIP17 by SBT6.1 (S1P) and S2P, and the N-terminal bZIP component is translocated to the nucleus, where it activates the expression and production of ER chaperones, as well as protein involved in brassinosteroid (BR) signaling, which is required for stress acclimation and growth. This Arabidopsis thaliana (Mouse-ear cress) protein is bZIP transcription factor 17.